The sequence spans 107 residues: Stellacyanin (107 aa).

A Phytocyanin domain is found at 1–105 (TVYTVGDSAG…GQKVHINVTV (105 aa)). N-linked (GlcNAc...) asparagine glycosylation occurs at asparagine 28. Position 46 (histidine 46) interacts with Cu cation. Cysteine 59 and cysteine 93 are joined by a disulfide. Asparagine 60 is a glycosylation site (N-linked (GlcNAc...) asparagine). Residues cysteine 87, histidine 92, and glutamine 97 each contribute to the Cu cation site. An N-linked (GlcNAc...) asparagine glycan is attached at asparagine 102.

The polypeptide is Stellacyanin (Toxicodendron vernicifluum (Japanese lacquer tree)).